We begin with the raw amino-acid sequence, 295 residues long: Nucleotide-binding protein RD1_1380 (295 aa).

16-23 serves as a coordination point for ATP; the sequence is GPSGAGRS. 63–66 contributes to the GTP binding site; the sequence is DPRN.

Belongs to the RapZ-like family.

Displays ATPase and GTPase activities. The protein is Nucleotide-binding protein RD1_1380 of Roseobacter denitrificans (strain ATCC 33942 / OCh 114) (Erythrobacter sp. (strain OCh 114)).